We begin with the raw amino-acid sequence, 284 residues long: Polyamine aminopropyltransferase (284 aa).

Residues 2–237 (ELWYTEQHTE…GHWLFGFASK (236 aa)) form the PABS domain. Glutamine 31 contacts S-methyl-5'-thioadenosine. Spermidine-binding residues include histidine 62 and aspartate 86. Residues glutamate 106 and 137–138 (DG) contribute to the S-methyl-5'-thioadenosine site. Aspartate 155 functions as the Proton acceptor in the catalytic mechanism. Position 155–158 (155–158 (DSTD)) interacts with spermidine. An S-methyl-5'-thioadenosine-binding site is contributed by proline 162.

This sequence belongs to the spermidine/spermine synthase family. As to quaternary structure, homodimer or homotetramer.

The protein resides in the cytoplasm. The enzyme catalyses S-adenosyl 3-(methylsulfanyl)propylamine + putrescine = S-methyl-5'-thioadenosine + spermidine + H(+). It functions in the pathway amine and polyamine biosynthesis; spermidine biosynthesis; spermidine from putrescine: step 1/1. Its function is as follows. Catalyzes the irreversible transfer of a propylamine group from the amino donor S-adenosylmethioninamine (decarboxy-AdoMet) to putrescine (1,4-diaminobutane) to yield spermidine. In Clostridium beijerinckii (strain ATCC 51743 / NCIMB 8052) (Clostridium acetobutylicum), this protein is Polyamine aminopropyltransferase.